Consider the following 305-residue polypeptide: Epoxyqueuosine reductase (305 aa).

Catalysis depends on aspartate 128, which acts as the Proton donor. The 33-residue stretch at 170–202 (LSLTSDTPHAKYCGTCRKCLDICPTKAIVHPFV) folds into the 4Fe-4S ferredoxin-type domain. Residues cysteine 182, cysteine 185, cysteine 188, cysteine 192, cysteine 208, cysteine 236, cysteine 239, and cysteine 243 each coordinate [4Fe-4S] cluster.

This sequence belongs to the QueG family. Monomer. The cofactor is cob(II)alamin. [4Fe-4S] cluster is required as a cofactor.

It localises to the cytoplasm. The catalysed reaction is epoxyqueuosine(34) in tRNA + AH2 = queuosine(34) in tRNA + A + H2O. It functions in the pathway tRNA modification; tRNA-queuosine biosynthesis. Its function is as follows. Catalyzes the conversion of epoxyqueuosine (oQ) to queuosine (Q), which is a hypermodified base found in the wobble positions of tRNA(Asp), tRNA(Asn), tRNA(His) and tRNA(Tyr). This Atelocyanobacterium thalassa (isolate ALOHA) protein is Epoxyqueuosine reductase.